The following is a 377-amino-acid chain: Adaptive-response sensory kinase SasA (377 aa).

The Histidine kinase domain occupies 154-373 (MLVHDLRSPL…SFHFTLPVYR (220 aa)). The residue at position 157 (H157) is a Phosphohistidine; by autocatalysis.

As to quaternary structure, homooligomerizes. Interacts with KaiC. Participates in the KaiABC clock complex, whose core is composed of a KaiC homohexamer, 6 KaiB and up to 6 KaiA dimers. SasA and KaiB(fs) compete to bind to KaiC.

It carries out the reaction ATP + protein L-histidine = ADP + protein N-phospho-L-histidine.. Member of the two-component regulatory system SasA/RpaA involved in genome-wide circadian gene expression. One of several clock output pathways. Participates in the Kai clock protein complex, the main circadian regulator in cyanobacteria, via its interaction with KaiC. KaiC enhances the autophosphorylation activity of SasA, which then transfers its phosphate group to RpaA to activate it. In addition to its output function, recruits fold-shifted KaiB (KaiB(fs)) to KaiC to cooperatively form the KaiB(6):KaiC(6) complex (independent of SasA kinase activity). Required for robustness of the circadian rhythm of gene expression and is involved in clock output, also required for adaptation to light/dark cycles. In Synechococcus sp. (strain JA-3-3Ab) (Cyanobacteria bacterium Yellowstone A-Prime), this protein is Adaptive-response sensory kinase SasA.